The chain runs to 291 residues: Diaminopimelate epimerase (291 aa).

Substrate is bound by residues Asn-17, Gln-50, and Asn-70. Cys-79 serves as the catalytic Proton donor. Substrate is bound by residues 80–81 (GN), Asn-167, Asn-200, and 218–219 (ER). Catalysis depends on Cys-227, which acts as the Proton acceptor. 228 to 229 (GS) serves as a coordination point for substrate.

Belongs to the diaminopimelate epimerase family. Homodimer.

The protein resides in the cytoplasm. It carries out the reaction (2S,6S)-2,6-diaminopimelate = meso-2,6-diaminopimelate. It participates in amino-acid biosynthesis; L-lysine biosynthesis via DAP pathway; DL-2,6-diaminopimelate from LL-2,6-diaminopimelate: step 1/1. Functionally, catalyzes the stereoinversion of LL-2,6-diaminopimelate (L,L-DAP) to meso-diaminopimelate (meso-DAP), a precursor of L-lysine and an essential component of the bacterial peptidoglycan. The sequence is that of Diaminopimelate epimerase from Bradyrhizobium diazoefficiens (strain JCM 10833 / BCRC 13528 / IAM 13628 / NBRC 14792 / USDA 110).